The primary structure comprises 394 residues: Protein BUR2 (394 aa).

2 disordered regions span residues 1–32 (MVLSASEEIANSQPSGNGKTSLDIKQNEGNPQ) and 372–394 (MSERSIKRPSEPPAEQATKKPRF). Positions 9 to 32 (IANSQPSGNGKTSLDIKQNEGNPQ) are enriched in polar residues. Over residues 372–381 (MSERSIKRPS) the composition is skewed to basic and acidic residues.

In terms of assembly, belongs to the BUR kinase complex.

The protein localises to the nucleus. Its function is as follows. Component of the BUR kinase complex involved in transcription regulation. This complex phosphorylates the UBC2/RAD6 ubiquitin-conjugating enzyme (E2), leading to monoubiquitination of histone H2B and the silencing of telomeric-associated genes. Also required for histone H3 methylation. Necessary for the recovery from pheromone-induced growth arrest in the cell cycle G1 phase. The kinase activity of the complex requires the presence of BUR2. Overexpression of BUR2 interferes with mitotic chromosome segregation. In Kluyveromyces lactis (strain ATCC 8585 / CBS 2359 / DSM 70799 / NBRC 1267 / NRRL Y-1140 / WM37) (Yeast), this protein is Protein BUR2 (BUR2).